The sequence spans 54 residues: Conotoxin vc5c (54 aa).

Positions 1-14 are cleaved as a signal peptide; it reads VILLLLIASIPSDA. The propeptide occupies 15-43; sequence VQLKTKDDMPLASFHGNARRTLQMLSNKR. 4-carboxyglutamate is present on E50. 6'-bromotryptophan is present on W51.

The protein belongs to the conotoxin T superfamily. Contains 2 disulfide bonds that can be either 'C1-C3, C2-C4' or 'C1-C4, C2-C3', since these disulfide connectivities have been observed for conotoxins with cysteine framework V (for examples, see AC P0DQQ7 and AC P81755). As to expression, expressed by the venom duct.

The protein localises to the secreted. The protein is Conotoxin vc5c of Conus victoriae (Queen Victoria cone).